The primary structure comprises 114 residues: Transmembrane protein 14C (114 aa).

4 helical membrane passes run 8–28 (LVPL…GGII), 33–53 (AGSV…GLGS), 62–82 (NIWL…MRFY), and 87–107 (FMPA…LGIS).

The protein resides in the mitochondrion membrane. In terms of biological role, required for normal heme biosynthesis. This is Transmembrane protein 14C (TMEM14C) from Bos taurus (Bovine).